The primary structure comprises 219 residues: Cytidylate kinase (219 aa).

Residue 21–29 (GPAASGKGT) coordinates ATP.

The protein belongs to the cytidylate kinase family. Type 1 subfamily.

It is found in the cytoplasm. The enzyme catalyses CMP + ATP = CDP + ADP. It carries out the reaction dCMP + ATP = dCDP + ADP. This is Cytidylate kinase from Rickettsia africae (strain ESF-5).